The following is a 431-amino-acid chain: MNVLIIGSGGREHALAWKVAQDPRVQKVFVAPGNAGTAIEAKCENVAIDVLALEQLADFAENNVSLTIVGPEVPLVAGVVDLFRSRGLDCFGPTAGAAQLEGSKAFTKDFLARHKIPTADYQNFTEIEPALAYLREKGAPIVIKADGLAAGKGVIVAMTLTEAEDAVQDMLAGNAFGEAGSRVVIEEFLDGEEASFIVMVDGKNVLPMATSQDHKRVGDGDSGPNTGGMGAYSPAPVVTADVHQRVMDLVIWPTVRGMADEGNVYTGFLYAGLMIDKAGNPKVIEFNCRFGDPETQPVMLRLQSSLVLLIEAALAQALDKVEAQWDPRPSLGIVLAAGGYPGDYAKGAIIEGLDAAALLEGKIFHAGTTLQDDRVVTSGGRVLCATALGDSVGSAQKNAYALAAKVDWQGCFYRTDIGYRAIARERGEDQE.

Residues 108–315 (KDFLARHKIP…LVLLIEAALA (208 aa)) form the ATP-grasp domain. ATP is bound at residue 134-195 (LREKGAPIVI…EEFLDGEEAS (62 aa)). Mg(2+)-binding residues include Glu-285 and Asn-287.

It belongs to the GARS family. It depends on Mg(2+) as a cofactor. Mn(2+) serves as cofactor.

It catalyses the reaction 5-phospho-beta-D-ribosylamine + glycine + ATP = N(1)-(5-phospho-beta-D-ribosyl)glycinamide + ADP + phosphate + H(+). Its pathway is purine metabolism; IMP biosynthesis via de novo pathway; N(1)-(5-phospho-D-ribosyl)glycinamide from 5-phospho-alpha-D-ribose 1-diphosphate: step 2/2. In Pseudomonas syringae pv. tomato (strain ATCC BAA-871 / DC3000), this protein is Phosphoribosylamine--glycine ligase.